We begin with the raw amino-acid sequence, 31 residues long: Leaf cyclotide 1 (31 aa).

Residues 1–31 (SISCGESCAMISFCFTEVIGCSCKNKVCYLN) constitute a cross-link (cyclopeptide (Ser-Asn)). 3 disulfides stabilise this stretch: Cys-4/Cys-21, Cys-8/Cys-23, and Cys-14/Cys-28.

Post-translationally, this is a cyclic peptide. In terms of tissue distribution, expressed in leaves.

Probably participates in a plant defense mechanism. Has anti-human immunodeficiency virus activity. The protein is Leaf cyclotide 1 of Viola hederacea (Australian violet).